A 68-amino-acid chain; its full sequence is Large ribosomal subunit protein uL29 (68 aa).

The protein belongs to the universal ribosomal protein uL29 family.

The chain is Large ribosomal subunit protein uL29 (rpl29) from Pyrococcus abyssi (strain GE5 / Orsay).